The sequence spans 317 residues: Nitrilase (317 aa).

One can recognise a CN hydrolase domain in the interval 5–280 (VKVAVVQAEP…DGVIISELDM (276 aa)). Glutamate 45 serves as the catalytic Proton acceptor. Lysine 125 is a catalytic residue. Catalysis depends on cysteine 165, which acts as the Nucleophile.

This sequence belongs to the carbon-nitrogen hydrolase superfamily. Nitrilase family.

The enzyme catalyses a nitrile + 2 H2O = a carboxylate + NH4(+). Its function is as follows. Nitrilase that hydrolyzes preferentially 4-cyanopyridine. Is also able to hydrolyze some aliphatic nitriles, such as phenylacetonitrile. In Meyerozyma guilliermondii (strain ATCC 6260 / CBS 566 / DSM 6381 / JCM 1539 / NBRC 10279 / NRRL Y-324) (Yeast), this protein is Nitrilase.